Here is a 478-residue protein sequence, read N- to C-terminus: MDDDNGLELSLGLSLGGSSGKAKARDAPLEPKAEPQVEESSSKGGLQTPDAPSGKFYQKSADNHEQNSKQRHSPVAPQFGNFWGQPGNSSGPVVDGSVEPVSHQPQLSSYQDGRMPINSGNNSEEQKPVSGNHKLPSEEMNFQKKHQTASDQPDAFSKSSDGGAKNAPISISTDDGSTGENEDVAESEAEGSNSWLVAQREDSAKGSVVNKGSDRKRSADAAADGFKGKRQPSFSGSESSSGKLTPGNLISMQASNVVALPYQVPGQVSGPPVLTNAPNFHPVCTVQLRPPTNGGLAVQTMGSASQVAFGYPAVQLPTLETGSSWAFGAPPQALSSFTAKDKADQTGTKQVDDGKKPQEAGASSSAHAEDEKKADRGLSLMGSAIRPGIAPNVKFGGSGSYPDLPWVSTIGAGPNGRTISGVTYKFGRNEVKIVCACHGTHMSPEEFMRHASADAPAQDNSATLPAFPAGNQATSAEN.

3 disordered regions span residues Met1–Gly247, Phe337–Ala374, and Asp454–Asn478. Over residues Lys23 to Pro35 the composition is skewed to basic and acidic residues. The span at Ile169–Gly179 shows a compositional bias: polar residues. Residues Glu180–Ala189 are compositionally biased toward acidic residues. Positions Ser233–Gly242 are enriched in low complexity. The span at Ala339–Gln358 shows a compositional bias: basic and acidic residues.

It belongs to the Ninja family.

It is found in the nucleus. In Zea mays (Maize), this protein is Ninja-family protein 8.